The sequence spans 73 residues: UPF0346 protein SSP1318 (73 aa).

The protein belongs to the UPF0346 family.

In Staphylococcus saprophyticus subsp. saprophyticus (strain ATCC 15305 / DSM 20229 / NCIMB 8711 / NCTC 7292 / S-41), this protein is UPF0346 protein SSP1318.